The chain runs to 341 residues: D-aspartate oxidase (341 aa).

Asp-36, Lys-37, Thr-43, Ser-44, Met-50, Gly-307, Ile-311, and Ser-312 together coordinate FAD. A Microbody targeting signal motif is present at residues Ser-339–Leu-341.

The protein belongs to the DAMOX/DASOX family. Monomer. Interacts with PEX5; the interaction is direct and required for localization of DDO to the peroxisome. Interacts with DAOA; the interaction is direct and increases the degradation rate of DDO. FAD serves as cofactor. Post-translationally, may be S-nitrosylated. As to expression, expressed in epithelial cells of the proximal nephron tubules in the renal cortex (at protein level). In the brain, expressed in the frontal, temporal, and occipital lobes of the cortex, hippocampus, striatum, diencephalon, brainstem, cerebellum, spinal cord, plexus choroiderus and ependyma (at protein level). Expression is increased in the prefrontal cortex of schizophrenic patients. Levels are normal in the superior frontal gyrus of patients with Alzheimer's disease.

It is found in the peroxisome matrix. The protein localises to the cytoplasm. The protein resides in the cytosol. It catalyses the reaction D-aspartate + O2 + H2O = oxaloacetate + H2O2 + NH4(+). It carries out the reaction D-glutamate + O2 + H2O = H2O2 + 2-oxoglutarate + NH4(+). Its activity is regulated as follows. Inhibited by the benzodiazepine olanzapine. Inhibited by aminooxyacetic acid, thiolactomycin, malonate and meso-tartrate. Clozapine, haloperidol and chlorpromazine have no effect on activity. Not inhibited by sodium, potassium, magnesium, iron, calcium, cobalt, copper, nickel, manganese or zinc ions. Not inhibited by AMP, ADP, ATP, or cAMP. Not inhibited by pyridoxal 5'-phosphate. Its function is as follows. Selectively catalyzes the oxidative deamination of acidic amino acids. Suppresses the level of D-aspartate in the brain, an amino acid that can act as an agonist for glutamate receptors. Protects the organism from the toxicity of D-amino acids. May also function in the intestine. This Homo sapiens (Human) protein is D-aspartate oxidase (DDO).